A 151-amino-acid polypeptide reads, in one-letter code: uncharacterized protein (151 aa).

3 consecutive 4Fe-4S ferredoxin-type domains span residues 4-32 (KIIVLNPEKCTKCYDCINICKEIHGESRV), 33-63 (RKVDGIPIFCMQCENAPCKEICPVDAIYLKD), and 64-93 (GIPIVDKERCIACGMCAIACPIGAIFIKNR). Positions 13, 16, 19, 23, 42, 45, 50, 54, 73, 76, 79, 83, 98, 101, 111, and 115 each coordinate [4Fe-4S] cluster.

[4Fe-4S] cluster is required as a cofactor.

This is an uncharacterized protein from Methanocaldococcus jannaschii (strain ATCC 43067 / DSM 2661 / JAL-1 / JCM 10045 / NBRC 100440) (Methanococcus jannaschii).